The chain runs to 88 residues: YcgL domain-containing protein HI_1446 (88 aa).

Positions 1-85 (MLCAIYKSKK…QDDGLFNSLS (85 aa)) constitute a YcgL domain.

In Haemophilus influenzae (strain ATCC 51907 / DSM 11121 / KW20 / Rd), this protein is YcgL domain-containing protein HI_1446.